A 343-amino-acid chain; its full sequence is Aspartate beta-hydroxylase domain-containing protein 2 (343 aa).

The Cytoplasmic segment spans residues 1 to 31 (MWLEWLVAWSWSLDGLRDCIATGIQSVRDCD). Residues 32 to 52 (GTAVITVACLLVLFVWYCYHV) traverse the membrane as a helical segment. Residues 53–343 (GREQPRPHVS…ALDFIFAPGR (291 aa)) are Lumenal-facing. 2 N-linked (GlcNAc...) asparagine glycosylation sites follow: N77 and N185. 2-oxoglutarate is bound by residues W202 and S246. H257 serves as a coordination point for Fe cation. 266-268 (RCH) contacts 2-oxoglutarate. H302 contacts Fe cation. R315 provides a ligand contact to 2-oxoglutarate.

It belongs to the aspartyl/asparaginyl beta-hydroxylase family. It depends on Fe cation as a cofactor.

Its subcellular location is the membrane. In terms of biological role, may function as 2-oxoglutarate-dependent dioxygenase. This chain is Aspartate beta-hydroxylase domain-containing protein 2 (Asphd2), found in Rattus norvegicus (Rat).